A 539-amino-acid chain; its full sequence is Gamma-2-syntrophin (539 aa).

One can recognise a PDZ domain in the interval 73-156 (TVTLRRQPVG…EVTITVEYLR (84 aa)). Low complexity-rich tracts occupy residues 168–183 (SPGP…SSPL) and 194–205 (SSTTAPSSPSSP). The segment at 168–209 (SPGPSSDHSSGASSPLFDSGLHLNGNSSTTAPSSPSSPIAKD) is disordered. One can recognise a PH domain in the interval 296–421 (QVVHMGWVNE…WEKSFQRATF (126 aa)).

This sequence belongs to the syntrophin family. In terms of assembly, interacts with the dystrophin protein DMD and related proteins DTNA and DTNB. As to expression, widely expressed. Strong expression in brain and testis. In CNS, it is expressed in the perikaryon and proximal portion of the neuronal processes. Strong expression in the hippocampus, neuron-rich dendate granule cells, and pyramidal cell layers. Highly expressed in neurons of the cerebral cortex. Also expressed in the cerebellar cortex, deep cerebellar nuclei, thalamus, and basal ganglia.

Its subcellular location is the cell membrane. It localises to the sarcolemma. The protein localises to the cytoplasm. It is found in the cytoskeleton. In terms of biological role, adapter protein that binds to and probably organizes the subcellular localization of a variety of proteins. May link various receptors to the actin cytoskeleton and the dystrophin glycoprotein complex. The polypeptide is Gamma-2-syntrophin (SNTG2) (Homo sapiens (Human)).